The following is a 168-amino-acid chain: Dual-action ribosomal maturation protein DarP (168 aa).

Belongs to the DarP family.

It is found in the cytoplasm. Functionally, member of a network of 50S ribosomal subunit biogenesis factors which assembles along the 30S-50S interface, preventing incorrect 23S rRNA structures from forming. Promotes peptidyl transferase center (PTC) maturation. The chain is Dual-action ribosomal maturation protein DarP from Neisseria meningitidis serogroup B (strain ATCC BAA-335 / MC58).